The sequence spans 103 residues: Pyrimidine/purine nucleoside phosphorylase (103 aa).

It belongs to the nucleoside phosphorylase PpnP family.

The enzyme catalyses a purine D-ribonucleoside + phosphate = a purine nucleobase + alpha-D-ribose 1-phosphate. The catalysed reaction is adenosine + phosphate = alpha-D-ribose 1-phosphate + adenine. It catalyses the reaction cytidine + phosphate = cytosine + alpha-D-ribose 1-phosphate. It carries out the reaction guanosine + phosphate = alpha-D-ribose 1-phosphate + guanine. The enzyme catalyses inosine + phosphate = alpha-D-ribose 1-phosphate + hypoxanthine. The catalysed reaction is thymidine + phosphate = 2-deoxy-alpha-D-ribose 1-phosphate + thymine. It catalyses the reaction uridine + phosphate = alpha-D-ribose 1-phosphate + uracil. It carries out the reaction xanthosine + phosphate = alpha-D-ribose 1-phosphate + xanthine. Catalyzes the phosphorolysis of diverse nucleosides, yielding D-ribose 1-phosphate and the respective free bases. Can use uridine, adenosine, guanosine, cytidine, thymidine, inosine and xanthosine as substrates. Also catalyzes the reverse reactions. This is Pyrimidine/purine nucleoside phosphorylase from Shewanella denitrificans (strain OS217 / ATCC BAA-1090 / DSM 15013).